A 526-amino-acid polypeptide reads, in one-letter code: Peptide chain release factor 3 (526 aa).

Positions 9–277 constitute a tr-type G domain; that stretch reads DKRRTFAIIS…GIVEWAPIPQ (269 aa). Residues 18–25, 86–90, and 140–143 contribute to the GTP site; these read SHPDAGKT, DTPGH, and NKLD.

It belongs to the TRAFAC class translation factor GTPase superfamily. Classic translation factor GTPase family. PrfC subfamily.

The protein resides in the cytoplasm. In terms of biological role, increases the formation of ribosomal termination complexes and stimulates activities of RF-1 and RF-2. It binds guanine nucleotides and has strong preference for UGA stop codons. It may interact directly with the ribosome. The stimulation of RF-1 and RF-2 is significantly reduced by GTP and GDP, but not by GMP. The chain is Peptide chain release factor 3 from Shewanella halifaxensis (strain HAW-EB4).